Consider the following 189-residue polypeptide: Group XIIA secretory phospholipase A2 (189 aa).

The N-terminal stretch at 1 to 22 (MALLSRPALTLLLLLMAAVVRC) is a signal peptide. Ca(2+) contacts are provided by G88, P90, and F92. H110 is a catalytic residue. D111 contributes to the Ca(2+) binding site. D125 is a catalytic residue.

The cofactor is Ca(2+). In terms of tissue distribution, abundantly expressed in heart, skeletal muscle, kidney, liver and pancreas.

The protein resides in the secreted. It localises to the cytoplasm. It catalyses the reaction a 1,2-diacyl-sn-glycero-3-phosphocholine + H2O = a 1-acyl-sn-glycero-3-phosphocholine + a fatty acid + H(+). In terms of biological role, PA2 catalyzes the calcium-dependent hydrolysis of the 2-acyl groups in 3-sn-phosphoglycerides. Does not exhibit detectable activity toward sn-2-arachidonoyl- or linoleoyl-phosphatidylcholine or -phosphatidylethanolamine. This Homo sapiens (Human) protein is Group XIIA secretory phospholipase A2 (PLA2G12A).